The chain runs to 722 residues: Tudor domain-containing protein 3 (722 aa).

Positions 264–304 (LVDEKALRHITEMGFSKEASRQALMDNGNNLEAALNVLLNS) constitute a UBA domain. 3 disordered regions span residues 305–342 (NKQKPVTGPPLRGKGKGRGRIRSEDEEELGNARPSAPS), 355–453 (LSVE…RSYS), and 470–526 (SDTV…HFYD). A Phosphoserine modification is found at Ser327. Residues 362 to 388 (SQPQQLHQGQNRVSNTEQNGVKDNNQP) are compositionally biased toward polar residues. Composition is skewed to basic and acidic residues over residues 392 to 409 (PRNDTRQPRNEKPPRFQR) and 442 to 453 (AEERTKCDRSYS). A Glycyl lysine isopeptide (Lys-Gly) (interchain with G-Cter in SUMO2) cross-link involves residue Lys541. Residues 626–686 (LWKSGDECLA…RPIQSEAWEE (61 aa)) enclose the Tudor domain. The segment covering 695 to 704 (EFRRGGDGQP) has biased composition (basic and acidic residues). The disordered stretch occupies residues 695–722 (EFRRGGDGQPRRSTRPTQQFYQPPRARN). Residues 702–722 (GQPRRSTRPTQQFYQPPRARN) are EBM motif; may mediate interaction with the EJC.

As to quaternary structure, component of mRNA stress granules. Interacts with FMR1, FXR1, FXR2, EWSR1, FUS, SERBP1, EEF1A1 and DDX3X or DDX3Y, and with the small nuclear ribonucleoprotein-associated proteins SNRPB and SNRPN. Interacts with 'Lys-48'-linked tetra-ubiquitin, but not with monoubiquitin or 'Lys-63'-linked ubiquitin chains. May interact with the exon junction complex (EJC) composed at least of CASC3, EIF4A3, MAGOH and RBM8A. Interacts with POLR2A (via the C-terminal domain (CTD)).

The protein localises to the cytoplasm. Its subcellular location is the nucleus. Its function is as follows. Scaffolding protein that specifically recognizes and binds dimethylarginine-containing proteins. Plays a role in the regulation of translation of target mRNAs by binding Arg/Gly-rich motifs (GAR) in dimethylarginine-containing proteins. In nucleus, acts as a coactivator: recognizes and binds asymmetric dimethylation on the core histone tails associated with transcriptional activation (H3R17me2a and H4R3me2a) and recruits proteins at these arginine-methylated loci. In cytoplasm, acts as an antiviral factor that participates in the assembly of stress granules together with G3BP1. The sequence is that of Tudor domain-containing protein 3 (TDRD3) from Bos taurus (Bovine).